Consider the following 175-residue polypeptide: Adenine phosphoribosyltransferase (175 aa).

This sequence belongs to the purine/pyrimidine phosphoribosyltransferase family. In terms of assembly, homodimer.

The protein resides in the cytoplasm. It catalyses the reaction AMP + diphosphate = 5-phospho-alpha-D-ribose 1-diphosphate + adenine. It functions in the pathway purine metabolism; AMP biosynthesis via salvage pathway; AMP from adenine: step 1/1. Functionally, catalyzes a salvage reaction resulting in the formation of AMP, that is energically less costly than de novo synthesis. This is Adenine phosphoribosyltransferase from Lactobacillus delbrueckii subsp. bulgaricus (strain ATCC 11842 / DSM 20081 / BCRC 10696 / JCM 1002 / NBRC 13953 / NCIMB 11778 / NCTC 12712 / WDCM 00102 / Lb 14).